A 240-amino-acid polypeptide reads, in one-letter code: Probable transcriptional regulatory protein Csal_0810 (240 aa).

Belongs to the TACO1 family.

Its subcellular location is the cytoplasm. This Chromohalobacter salexigens (strain ATCC BAA-138 / DSM 3043 / CIP 106854 / NCIMB 13768 / 1H11) protein is Probable transcriptional regulatory protein Csal_0810.